Here is a 185-residue protein sequence, read N- to C-terminus: Bcl-2-modifying factor (185 aa).

The interval 1–28 (MEPPQCVEELEDDVFQPEDGEPGTQPGS) is disordered. A compositionally biased stretch (acidic residues) spans 8 to 21 (EELEDDVFQPEDGE). Residues 67–75 (DKATQTLSP) are interaction with DLC2. The BH3 signature appears at 134-148 (IARKLQCIADQFHRL).

Belongs to the Bcl-2 family. In terms of assembly, interacts with MCL1, BCL2, BCL2L1/BCL-Xl, BCL2A1 and BCL2L2/BCL-w. Interacts with the myosin V actin motor complex through its binding to DLC2.

Functionally, may play a role in apoptosis. The chain is Bcl-2-modifying factor (Bmf) from Rattus norvegicus (Rat).